The primary structure comprises 115 residues: uncharacterized protein (115 aa).

3 consecutive transmembrane segments (helical) span residues 6–26, 43–63, and 84–104; these read ILII…PFMV, ALSC…IHIL, and IFKV…VLVQ.

Belongs to the AzlD/HI_1737/HP1330 family.

The protein resides in the cell membrane. This is an uncharacterized protein from Helicobacter pylori (strain ATCC 700392 / 26695) (Campylobacter pylori).